The sequence spans 101 residues: MALTKADMAERLFEEVGLNKREAKELVESFFEEIRQALEDGVPVKLSGFGNFDLRDKNERPGRNPKTGEEIPISARRVVTFRPGQKLKSRVEAYAGNVKQS.

This sequence belongs to the bacterial histone-like protein family. Heterodimer of an alpha and a beta chain.

This protein is one of the two subunits of integration host factor, a specific DNA-binding protein that functions in genetic recombination as well as in transcriptional and translational control. This Alkalilimnicola ehrlichii (strain ATCC BAA-1101 / DSM 17681 / MLHE-1) protein is Integration host factor subunit alpha.